An 89-amino-acid polypeptide reads, in one-letter code: Large ribosomal subunit protein bL27 (89 aa).

The interval 1-22 is disordered; sequence MAHKKGTGSTRNGRDSNAQRLG. Residues 7-19 show a composition bias toward polar residues; sequence TGSTRNGRDSNAQ.

It belongs to the bacterial ribosomal protein bL27 family.

In Cyanothece sp. (strain PCC 7425 / ATCC 29141), this protein is Large ribosomal subunit protein bL27.